The sequence spans 273 residues: Nucleotide-binding protein TT_C1664 (273 aa).

8–15 contacts ATP; that stretch reads GLSGAGKT. Residue 57-60 coordinates GTP; sequence DARA.

Belongs to the RapZ-like family.

Its function is as follows. Displays ATPase and GTPase activities. This chain is Nucleotide-binding protein TT_C1664, found in Thermus thermophilus (strain ATCC BAA-163 / DSM 7039 / HB27).